Consider the following 211-residue polypeptide: Protein-L-isoaspartate O-methyltransferase (211 aa).

Ser-62 is a catalytic residue.

It belongs to the methyltransferase superfamily. L-isoaspartyl/D-aspartyl protein methyltransferase family.

The protein localises to the cytoplasm. The catalysed reaction is [protein]-L-isoaspartate + S-adenosyl-L-methionine = [protein]-L-isoaspartate alpha-methyl ester + S-adenosyl-L-homocysteine. Functionally, catalyzes the methyl esterification of L-isoaspartyl residues in peptides and proteins that result from spontaneous decomposition of normal L-aspartyl and L-asparaginyl residues. It plays a role in the repair and/or degradation of damaged proteins. The sequence is that of Protein-L-isoaspartate O-methyltransferase from Shewanella sp. (strain ANA-3).